Here is a 525-residue protein sequence, read N- to C-terminus: GMP synthase [glutamine-hydrolyzing] (525 aa).

In terms of domain architecture, Glutamine amidotransferase type-1 spans 12–206; that stretch reads RILIIDFGSQ…THGICGCGGD (195 aa). Cysteine 90 (nucleophile) is an active-site residue. Active-site residues include histidine 180 and glutamate 182. In terms of domain architecture, GMPS ATP-PPase spans 207–399; sequence WTMAAFKDQA…LGLPDEMVGR (193 aa). Residue 234–240 participates in ATP binding; the sequence is SGGVDSS.

Homodimer.

It carries out the reaction XMP + L-glutamine + ATP + H2O = GMP + L-glutamate + AMP + diphosphate + 2 H(+). Its pathway is purine metabolism; GMP biosynthesis; GMP from XMP (L-Gln route): step 1/1. In terms of biological role, catalyzes the synthesis of GMP from XMP. This Rhodospirillum rubrum (strain ATCC 11170 / ATH 1.1.1 / DSM 467 / LMG 4362 / NCIMB 8255 / S1) protein is GMP synthase [glutamine-hydrolyzing].